The primary structure comprises 776 residues: MARGVAGVLRRAYSSRVTVLFSTRNLHSFRESESRSLCNSDFDVPTNRFCSGNRVRIQFPWNDYRFGCFEIGKVRSFSSTVDNNGENDDIEESVGSESDDYDEEGLINELSDVDEGLLNDSVVAETDEIGSEAARALNDRYHDPVELYRELRGSEVRSKLQHSEWDSLHEIFGFFAQSGWAANQALAIYIGKSFFPTAVSKFRDFFIEKCGIEVVQDLVRVGPTDVAVKFLFPVFVEFCIEEFPDEIKRFKSIVDTADLTKPATWFPFARAMKRKIVYHCGPTNSGKTYNALQRFMEAKNGLYCSPLRLLAMEVFDKVNALGIYCSLLTGQEKKYVPFANHVSCTVEMVSTDELYEVAVLDEIQMMADPSRGHAWTKALLGLKADEIHLCGDPSVLDIVRKMCADTGDELVEEHYERFKPLVVEAKTLLGELKNVKSGDCVVAFSRREIFEVKMAIEKHTNHRCCVIYGALPPETRRQQAKLFNDQENEYDVLVASDAVGMGLNLNIRRVVFYSLNKYNGDKIVPVAASQVKQIAGRAGRRGSRYPDGLTTTLHLEDLNYLIECLQQPFDEVTKVGLFPFFEQIELFAAQVPDMAFSNLLEHFGKHCRLDGSYFLCRHDHVKKVANMLEKVEGLSLEDRFNFCFAPVNIRNPRAMHNLYRFASSYSQNMPVNVAMGIPKSSAKSDAQLLDLESRHQILSMYLWLSNQFEENFPFVEKVEAMATNIAELLGESLSKASWKMESKEEKVKGQMKEDRGYERPASLIKLVKKRKDEKLV.

The N-terminal 84 residues, 1-84, are a transit peptide targeting the mitochondrion; the sequence is MARGVAGVLR…RSFSSTVDNN (84 aa). The disordered stretch occupies residues 80–101; the sequence is TVDNNGENDDIEESVGSESDDY. Positions 85–101 are enriched in acidic residues; the sequence is GENDDIEESVGSESDDY. The Helicase ATP-binding domain maps to 268-426; that stretch reads FARAMKRKIV…RFKPLVVEAK (159 aa). 281–288 contributes to the ATP binding site; the sequence is GPTNSGKT. The DEIH box; degenerate motif lies at 361–364; sequence DEIQ. Residues 427 to 595 enclose the Helicase C-terminal domain; that stretch reads TLLGELKNVK…LFAAQVPDMA (169 aa).

This sequence belongs to the DExH box helicase family. In terms of assembly, homodimer; in free form. Component of the mitochondrial degradosome (mtEXO) complex which is a heteropentamer containing 2 copies of SUPV3L1 and 3 copies of PNPT1. It depends on Mg(2+) as a cofactor. Mn(2+) serves as cofactor.

It is found in the nucleus. The protein localises to the mitochondrion matrix. Its subcellular location is the mitochondrion nucleoid. The catalysed reaction is ATP + H2O = ADP + phosphate + H(+). Its function is as follows. Major helicase player in mitochondrial RNA metabolism. Component of the mitochondrial degradosome (mtEXO) complex, that degrades 3' overhang double-stranded RNA with a 3'-to-5' directionality in an ATP-dependent manner. ATPase and ATP-dependent multisubstrate helicase, able to unwind double-stranded (ds) DNA and RNA, and RNA/DNA heteroduplexes in the 5'-to-3' direction. Plays a role in the RNA surveillance system in mitochondria; regulates the stability of mature mRNAs, the removal of aberrantly formed mRNAs and the rapid degradation of non coding processing intermediates. This is DExH-box ATP-dependent RNA helicase DExH18, mitochondrial from Arabidopsis thaliana (Mouse-ear cress).